The primary structure comprises 102 residues: Large ribosomal subunit protein bL21 (102 aa).

Belongs to the bacterial ribosomal protein bL21 family. Part of the 50S ribosomal subunit. Contacts protein L20.

In terms of biological role, this protein binds to 23S rRNA in the presence of protein L20. The sequence is that of Large ribosomal subunit protein bL21 from Campylobacter hominis (strain ATCC BAA-381 / DSM 21671 / CCUG 45161 / LMG 19568 / NCTC 13146 / CH001A).